Here is a 520-residue protein sequence, read N- to C-terminus: MNLKQEVESRKTFAIISHPDAGKTTLTEKLLYFSGAIREAGTVKGKKTGKFATSDWMKVEQERGISVTSSVMQFDYDDYKINILDTPGHEDFSEDTYRTLMAVDSAVMVIDCAKGIEPQTLKLFKVCKMRGIPIFTFINKLDRVGKEPFELLDEIEETLNIETYPMNWPIGMGQSFFGIIDRKSKTIEPFRDEENILHLNDDFELEEDHAITNDSDFEQAIEELMLVEEAGEAFDNDALLSGDLTPVFFGSALANFGVQNFLNAYVDFAPMPNARQTKEDVEVSPFDDSFSGFIFKIQANMDPKHRDRIAFMRVVSGAFERGMDVTLQRTNKKQKITRSTSFMADDKETVNHAVAGDIIGLYDTGNYQIGDTLVGGKQTYSFQDLPQFTPEIFMKVSAKNVMKQKHFHKGIEQLVQEGAIQYYKTLHTNQIILGAVGQLQFEVFEHRMKNEYNVDVVMEPVGRKIARWIENEDQITDKMNTSRSILVKDRYDDLVFLFENEFATRWFEEKFPEIKLYSLL.

Residues 8 to 277 form the tr-type G domain; sequence ESRKTFAIIS…FAPMPNARQT (270 aa). GTP is bound by residues 17 to 24, 85 to 89, and 139 to 142; these read SHPDAGKT, DTPGH, and NKLD.

The protein belongs to the TRAFAC class translation factor GTPase superfamily. Classic translation factor GTPase family. PrfC subfamily.

It localises to the cytoplasm. Functionally, increases the formation of ribosomal termination complexes and stimulates activities of RF-1 and RF-2. It binds guanine nucleotides and has strong preference for UGA stop codons. It may interact directly with the ribosome. The stimulation of RF-1 and RF-2 is significantly reduced by GTP and GDP, but not by GMP. This chain is Peptide chain release factor 3, found in Staphylococcus aureus (strain USA300 / TCH1516).